Reading from the N-terminus, the 253-residue chain is Diphthine synthase (253 aa).

S-adenosyl-L-methionine contacts are provided by residues D83, L86, 111–112, L163, and L205; that span reads SI.

The protein belongs to the diphthine synthase family. In terms of assembly, homodimer.

The catalysed reaction is 2-[(3S)-amino-3-carboxypropyl]-L-histidyl-[translation elongation factor 2] + 3 S-adenosyl-L-methionine = diphthine-[translation elongation factor 2] + 3 S-adenosyl-L-homocysteine + 3 H(+). Its pathway is protein modification; peptidyl-diphthamide biosynthesis. In terms of biological role, S-adenosyl-L-methionine-dependent methyltransferase that catalyzes the trimethylation of the amino group of the modified target histidine residue in translation elongation factor 2 (EF-2), to form an intermediate called diphthine. The three successive methylation reactions represent the second step of diphthamide biosynthesis. This is Diphthine synthase from Pyrobaculum neutrophilum (strain DSM 2338 / JCM 9278 / NBRC 100436 / V24Sta) (Thermoproteus neutrophilus).